The sequence spans 580 residues: PTS system fructose-specific EIIB'BC component (580 aa).

2 PTS EIIB type-2 domains span residues 1–99 (MSSS…QLAA) and 120–215 (IVAI…KALA). The active-site Phosphocysteine intermediate; for EIIB activity is the C126. C126 is modified (phosphocysteine; by EIIA). Residues 243–580 (AYKHLMTGVS…LKKPVADVIA (338 aa)) form the PTS EIIC type-2 domain. The next 9 membrane-spanning stretches (helical) occupy residues 254–274 (MLPF…LGGI), 289–309 (LFQI…AGYI), 332–352 (LNAG…GVAA), 369–389 (VLIL…YVFG), 410–430 (SALL…GGPV), 451–471 (AAAM…TWVF), 483–503 (ATAA…PYAA), 509–529 (TIPA…TAGA), and 549–571 (HLLN…LRLL).

It localises to the cell inner membrane. It carries out the reaction D-fructose(out) + N(pros)-phospho-L-histidyl-[protein] = D-fructose 1-phosphate(in) + L-histidyl-[protein]. In terms of biological role, the phosphoenolpyruvate-dependent sugar phosphotransferase system (sugar PTS), a major carbohydrate active transport system, catalyzes the phosphorylation of incoming sugar substrates concomitantly with their translocation across the cell membrane. The enzyme II FruAB PTS system is involved in fructose transport. This chain is PTS system fructose-specific EIIB'BC component, found in Xanthomonas campestris pv. campestris (strain ATCC 33913 / DSM 3586 / NCPPB 528 / LMG 568 / P 25).